Here is a 69-residue protein sequence, read N- to C-terminus: DNA-directed RNA polymerase subunit omega (69 aa).

It belongs to the RNA polymerase subunit omega family. As to quaternary structure, the RNAP catalytic core consists of 2 alpha, 1 beta, 1 beta' and 1 omega subunit. When a sigma factor is associated with the core the holoenzyme is formed, which can initiate transcription.

It carries out the reaction RNA(n) + a ribonucleoside 5'-triphosphate = RNA(n+1) + diphosphate. Functionally, promotes RNA polymerase assembly. Latches the N- and C-terminal regions of the beta' subunit thereby facilitating its interaction with the beta and alpha subunits. This is DNA-directed RNA polymerase subunit omega from Geotalea daltonii (strain DSM 22248 / JCM 15807 / FRC-32) (Geobacter daltonii).